A 356-amino-acid polypeptide reads, in one-letter code: Phospho-N-acetylmuramoyl-pentapeptide-transferase (356 aa).

A run of 10 helical transmembrane segments spans residues isoleucine 4 to histidine 24, glycine 53 to tryptophan 73, proline 76 to leucine 96, leucine 116 to valine 136, isoleucine 152 to glycine 172, leucine 186 to phenylalanine 206, aspartate 228 to alanine 248, isoleucine 253 to valine 273, leucine 278 to valine 298, and phenylalanine 333 to valine 353.

It belongs to the glycosyltransferase 4 family. MraY subfamily. Mg(2+) serves as cofactor.

The protein localises to the cell membrane. The catalysed reaction is UDP-N-acetyl-alpha-D-muramoyl-L-alanyl-gamma-D-glutamyl-meso-2,6-diaminopimeloyl-D-alanyl-D-alanine + di-trans,octa-cis-undecaprenyl phosphate = di-trans,octa-cis-undecaprenyl diphospho-N-acetyl-alpha-D-muramoyl-L-alanyl-D-glutamyl-meso-2,6-diaminopimeloyl-D-alanyl-D-alanine + UMP. It functions in the pathway cell wall biogenesis; peptidoglycan biosynthesis. Its function is as follows. Catalyzes the initial step of the lipid cycle reactions in the biosynthesis of the cell wall peptidoglycan: transfers peptidoglycan precursor phospho-MurNAc-pentapeptide from UDP-MurNAc-pentapeptide onto the lipid carrier undecaprenyl phosphate, yielding undecaprenyl-pyrophosphoryl-MurNAc-pentapeptide, known as lipid I. The polypeptide is Phospho-N-acetylmuramoyl-pentapeptide-transferase (Cutibacterium acnes (strain DSM 16379 / KPA171202) (Propionibacterium acnes)).